Consider the following 343-residue polypeptide: Calcium/calmodulin-dependent protein kinase type 1B (343 aa).

The Protein kinase domain maps to 15–270 (YEIREKLGSG…CQQALQHLWI (256 aa)). Residues 21–29 (LGSGAFSEV) and K44 contribute to the ATP site. D136 serves as the catalytic Proton acceptor. Positions 290-311 (KNFARTHWKRAFNATSFLRHIR) are calmodulin-binding. A disordered region spans residues 314–343 (GQSPEGEEASRQGMTRHSHPGLGTSQSPKW). A Phosphoserine modification is found at S338.

This sequence belongs to the protein kinase superfamily. CAMK Ser/Thr protein kinase family. CaMK subfamily. Isoform 1 and isoform 2 are phosphorylated by CAMKK1. Isoform 1 is expressed in liver, heart, lung, kidney, spleen and testis. Isoform 2 is predominantly expressed in cerebrum and cerebellum.

It localises to the cytoplasm. It is found in the nucleus. The enzyme catalyses L-seryl-[protein] + ATP = O-phospho-L-seryl-[protein] + ADP + H(+). It catalyses the reaction L-threonyl-[protein] + ATP = O-phospho-L-threonyl-[protein] + ADP + H(+). Its activity is regulated as follows. Activated by Ca(2+)/calmodulin. Must be phosphorylated to be maximally active. Activated by CAMKK1. In terms of biological role, calcium/calmodulin-dependent protein kinase belonging to a proposed calcium-triggered signaling cascade. In vitro, isoform 1 and isoform 2 phosphorylate CREB1, SYN1/synapsin I. Phosphorylates and activates CAMK1. The chain is Calcium/calmodulin-dependent protein kinase type 1B (Pnck) from Rattus norvegicus (Rat).